The following is a 153-amino-acid chain: 3-hydroxyacyl-[acyl-carrier-protein] dehydratase FabZ (153 aa).

The active site involves His-58.

This sequence belongs to the thioester dehydratase family. FabZ subfamily.

The protein resides in the cytoplasm. The enzyme catalyses a (3R)-hydroxyacyl-[ACP] = a (2E)-enoyl-[ACP] + H2O. Its function is as follows. Involved in unsaturated fatty acids biosynthesis. Catalyzes the dehydration of short chain beta-hydroxyacyl-ACPs and long chain saturated and unsaturated beta-hydroxyacyl-ACPs. The polypeptide is 3-hydroxyacyl-[acyl-carrier-protein] dehydratase FabZ (Bradyrhizobium diazoefficiens (strain JCM 10833 / BCRC 13528 / IAM 13628 / NBRC 14792 / USDA 110)).